Consider the following 330-residue polypeptide: Protein LEG1 homolog (330 aa).

An N-terminal signal peptide occupies residues 1–20 (MAFLPSWVCVLVGSFSASLA). N-linked (GlcNAc...) asparagine glycosylation is found at Asn24 and Asn69.

The protein belongs to the LEG1 family. As to expression, detected in saliva and in hypomineralized dental enamel (at protein level).

It is found in the secreted. May be involved in early liver development. In Homo sapiens (Human), this protein is Protein LEG1 homolog.